A 123-amino-acid polypeptide reads, in one-letter code: Hydrogenase maturation factor HypA (123 aa).

Histidine 2 is a binding site for Ni(2+). Positions 73, 76, 90, and 93 each coordinate Zn(2+).

Belongs to the HypA/HybF family.

In terms of biological role, involved in the maturation of [NiFe] hydrogenases. Required for nickel insertion into the metal center of the hydrogenase. The protein is Hydrogenase maturation factor HypA of Roseiflexus sp. (strain RS-1).